The following is a 62-amino-acid chain: Large ribosomal subunit protein bL28 (62 aa).

Positions 1–26 (MARKCYVTGKSPKSGNNRSHALNKTK) are disordered. The segment covering 11–20 (SPKSGNNRSH) has biased composition (polar residues).

The protein belongs to the bacterial ribosomal protein bL28 family.

The protein is Large ribosomal subunit protein bL28 of Exiguobacterium sibiricum (strain DSM 17290 / CCUG 55495 / CIP 109462 / JCM 13490 / 255-15).